A 322-amino-acid polypeptide reads, in one-letter code: 2-methylene-furan-3-one reductase (322 aa).

NADP(+) contacts are provided by residues lysine 59, 174-175, 197-200, tyrosine 215, isoleucine 253, 264-266, and 311-312; these read GV, STKK, FVL, and RA. Lysine 59 provides a ligand contact to substrate.

This sequence belongs to the zinc-containing alcohol dehydrogenase family. Quinone oxidoreductase subfamily. As to quaternary structure, monomer.

It carries out the reaction 4-hydroxy-2,5-dimethyl-furan-3(2H)-one + NADP(+) = 4-hydroxy-5-methyl-2-methylenefuran-3(2H)-one + NADPH + H(+). Functionally, enone oxidoreductase involved in the biosynthesis of 4-hydroxy-2,5-dimethyl-3(2H)-furanone (HDMF or furaneol), the key flavor compound in strawberries. The sequence is that of 2-methylene-furan-3-one reductase (EO) from Fragaria vesca (Woodland strawberry).